An 85-amino-acid chain; its full sequence is Metallothionein-like protein 4B (85 aa).

The tract at residues 1–20 is disordered; it reads MADTGKGSASASCNDRCGCP.

It belongs to the metallothionein superfamily. Type 15 family. As to expression, expressed specifically in seeds.

The protein resides in the cytoplasm. It localises to the nucleus. The protein localises to the cell membrane. In terms of biological role, metallothioneins have a high content of cysteine residues that bind various heavy metals. Functions as a metal chelator of copper (Cu) and zinc (Zn). Plays a role in storing and distributing Zn ion in seed. This is Metallothionein-like protein 4B (MT4B) from Arabidopsis thaliana (Mouse-ear cress).